The chain runs to 325 residues: Glutarate 2-hydroxylase (325 aa).

Fe cation-binding residues include histidine 160, aspartate 162, and histidine 292.

The protein belongs to the glutarate hydroxylase family. In terms of assembly, homotetramer. Fe(2+) serves as cofactor.

The catalysed reaction is glutarate + 2-oxoglutarate + O2 = (S)-2-hydroxyglutarate + succinate + CO2. It functions in the pathway amino-acid degradation. In terms of biological role, acts as an alpha-ketoglutarate-dependent dioxygenase catalyzing hydroxylation of glutarate (GA) to L-2-hydroxyglutarate (L2HG). Functions in a L-lysine degradation pathway that proceeds via cadaverine, glutarate and L-2-hydroxyglutarate. In Escherichia coli O157:H7, this protein is Glutarate 2-hydroxylase.